The primary structure comprises 1165 residues: ATP-dependent helicase/deoxyribonuclease subunit B (1165 aa).

The region spanning 1-324 (MRFIIGGAGS…LVEAQNRREE (324 aa)) is the UvrD-like helicase ATP-binding domain. An ATP-binding site is contributed by 6 to 13 (GGAGSGKS). The region spanning 282–597 (PLRFRGAPEL…IVGTVERSRH (316 aa)) is the UvrD-like helicase C-terminal domain. The [4Fe-4S] cluster site is built by Cys803, Cys1121, Cys1124, and Cys1130.

Belongs to the helicase family. AddB/RexB type 1 subfamily. In terms of assembly, heterodimer of AddA and AddB. Requires Mg(2+) as cofactor. [4Fe-4S] cluster is required as a cofactor.

The heterodimer acts as both an ATP-dependent DNA helicase and an ATP-dependent, dual-direction single-stranded exonuclease. Recognizes the chi site generating a DNA molecule suitable for the initiation of homologous recombination. The AddB subunit has 5' -&gt; 3' nuclease activity but not helicase activity. This chain is ATP-dependent helicase/deoxyribonuclease subunit B, found in Symbiobacterium thermophilum (strain DSM 24528 / JCM 14929 / IAM 14863 / T).